Reading from the N-terminus, the 258-residue chain is uncharacterized protein (258 aa).

Residue 36 to 43 (GKAGTGKS) participates in ATP binding.

Belongs to the IIV-6 075L family.

This is an uncharacterized protein from Acheta domesticus (House cricket).